Consider the following 358-residue polypeptide: Popeye domain-containing protein 1 (358 aa).

Topologically, residues methionine 1–alanine 48 are extracellular. N-linked (GlcNAc...) asparagine glycosylation is found at asparagine 2 and asparagine 30. A helical membrane pass occupies residues asparagine 49–leucine 69. Arginine 70 is a topological domain (cytoplasmic). The chain crosses the membrane as a helical span at residues valine 71–leucine 91. A topological domain (extracellular) is located at residue aspartate 92. A helical transmembrane segment spans residues valine 93–tyrosine 113. The interval valine 93–lysine 115 is required for interaction with CAV3. The Cytoplasmic portion of the chain corresponds to lysine 114–proline 358. Positions arginine 136 to arginine 186 are required for interaction with KCNK2. Phosphoserine occurs at positions 295 and 318. Low complexity predominate over residues serine 313–serine 323. The interval serine 313–aspartate 350 is disordered.

It belongs to the popeye family. In terms of assembly, homodimer. Homodimerization requires the C-terminus cytoplasmic region. Interacts (via the C-terminus cytoplasmic tail) with TJP1. Interacts (via the C-terminus cytoplasmic tail) with ARHGEF25/GEFT (via the DH domain). Interacts (via the C-terminus cytoplasmic tail) with VAMP3. Interacts with KCNK2; the interaction enhances KCNK2 surface expression and is inhibited by cAMP. Interacts with CAV3. Expressed in epithelial cells, skeletal muscle, heart and intestinal smooth muscle (at protein level). Expressed in fetal and adult heart and skeletal muscle.

The protein localises to the lateral cell membrane. It is found in the cell junction. The protein resides in the tight junction. Its subcellular location is the membrane. It localises to the cell membrane. The protein localises to the sarcolemma. It is found in the caveola. Functionally, cell adhesion molecule involved in the establishment and/or maintenance of cell integrity. Involved in the formation and regulation of the tight junction (TJ) paracellular permeability barrier in epithelial cells. Plays a role in VAMP3-mediated vesicular transport and recycling of different receptor molecules through its interaction with VAMP3. Plays a role in the regulation of cell shape and movement by modulating the Rho-family GTPase activity through its interaction with ARHGEF25/GEFT. Induces primordial adhesive contact and aggregation of epithelial cells in a Ca(2+)-independent manner. Also involved in striated muscle regeneration and repair and in the regulation of cell spreading. Important for the maintenance of cardiac function. Plays a regulatory function in heart rate dynamics mediated, at least in part, through cAMP-binding and, probably, by increasing cell surface expression of the potassium channel KCNK2 and enhancing current density. Is a caveolae-associated protein important for the preservation of caveolae structural and functional integrity as well as for heart protection against ischemia injury. This Mus musculus (Mouse) protein is Popeye domain-containing protein 1.